We begin with the raw amino-acid sequence, 690 residues long: Heterogeneous nuclear ribonucleoprotein M (690 aa).

Positions 1-13 (MAAGVEAAAEVAA) are enriched in low complexity. Positions 1-63 (MAAGVEAAAE…KRGGNRFEPY (63 aa)) are disordered. An N-acetylalanine modification is found at Ala-2. Lys-17 is covalently cross-linked (Glycyl lysine isopeptide (Lys-Gly) (interchain with G-Cter in SUMO2)). Position 29 is a phosphoserine (Ser-29). Residues Lys-37, Lys-68, and Lys-82 each participate in a glycyl lysine isopeptide (Lys-Gly) (interchain with G-Cter in SUMO2) cross-link. The segment covering 37 to 49 (KGEERPTQNEKRK) has biased composition (basic and acidic residues). 2 RRM domains span residues 70–148 (YRAF…EDPD) and 164–241 (STVF…MDER). A Phosphoserine modification is found at Ser-85. Residues Lys-87 and Lys-126 each participate in a glycyl lysine isopeptide (Lys-Gly) (interchain with G-Cter in SUMO2) cross-link. N6-acetyllysine; alternate is present on Lys-133. Residue Lys-133 forms a Glycyl lysine isopeptide (Lys-Gly) (interchain with G-Cter in SUMO2); alternate linkage. Residues Lys-142 and Lys-144 each participate in a glycyl lysine isopeptide (Lys-Gly) (interchain with G-Cter in SUMO2) cross-link. At Ser-164 the chain carries Phosphoserine. Lys-181 participates in a covalent cross-link: Glycyl lysine isopeptide (Lys-Gly) (interchain with G-Cter in SUMO2). Position 237 is an N6-acetyllysine; alternate (Lys-237). A Glycyl lysine isopeptide (Lys-Gly) (interchain with G-Cter in SUMO2); alternate cross-link involves residue Lys-237. Glycyl lysine isopeptide (Lys-Gly) (interchain with G-Cter in SUMO2) cross-links involve residues Lys-245 and Lys-305. 2 positions are modified to phosphoserine: Ser-325 and Ser-337. Glycyl lysine isopeptide (Lys-Gly) (interchain with G-Cter in SUMO2) cross-links involve residues Lys-341 and Lys-348. Ser-357 is subject to Phosphoserine. 4 consecutive repeat copies span residues 360-365 (GIERMG), 367-372 (GIDRIS), 375-380 (GMERMG), and 386-391 (GMDRVG). The interval 360-568 (GIERMGPGID…ALGAGIERMG (209 aa)) is 27 X 6 AA repeats of [GEVSTPAN]-[ILMV]-[DE]-[RH]-[MLVI]-[GAV]. A Phosphoserine modification is found at Ser-392. Repeat copies occupy residues 393 to 398 (EIERMG), 400 to 405 (VMDRMG), and 406 to 411 (SVERMG). At Ser-412 the chain carries Phosphoserine. 4 consecutive repeat copies span residues 413-418 (GIERMG), 421-426 (GLDHMA), 428-433 (SIERMG), and 435-440 (TMERIG). Residue Ser-428 is modified to Phosphoserine. Ser-441 is subject to Phosphoserine. Repeat copies occupy residues 442–447 (GVERMG), 453–458 (GLERMA), 460–465 (PIDRVG), 467–472 (TIERMG), 474–479 (GVERMG), 481–486 (AIERMG), 488–493 (SMDRMV), 500–505 (GLERMG), 507–512 (VMDRMA), 514–519 (GLERMG), 522–527 (NLERMG), 528–532 (LERMG), 535–540 (SLERMG), 541–545 (LERMG), 548–553 (SLERMG), and 563–568 (GIERMG). Position 456 is an omega-N-methylarginine (Arg-456). Residue Ser-488 is modified to Phosphoserine. Position 535 is a phosphoserine (Ser-535). Ser-548 carries the post-translational modification Phosphoserine. Phosphoserine occurs at positions 578, 593, and 597. Lys-611 participates in a covalent cross-link: Glycyl lysine isopeptide (Lys-Gly) (interchain with G-Cter in SUMO2). The region spanning 613–689 (CQIFVRNLPF…REIDVRIDRN (77 aa)) is the RRM 3 domain. Residue Thr-625 is modified to Phosphothreonine. Lys-627 participates in a covalent cross-link: Glycyl lysine isopeptide (Lys-Gly) (interchain with G-Cter in SUMO2). Position 632 is an N6-acetyllysine (Lys-632). Glycyl lysine isopeptide (Lys-Gly) (interchain with G-Cter in SUMO2) cross-links involve residues Lys-645 and Lys-652. Position 658 is an N6-acetyllysine; alternate (Lys-658). Residue Lys-658 forms a Glycyl lysine isopeptide (Lys-Gly) (interchain with G-Cter in SUMO2); alternate linkage. A Glycyl lysine isopeptide (Lys-Gly) (interchain with G-Cter in SUMO1); alternate cross-link involves residue Lys-658. Position 661 is a phosphoserine (Ser-661). A Glycyl lysine isopeptide (Lys-Gly) (interchain with G-Cter in SUMO2) cross-link involves residue Lys-676.

As to quaternary structure, identified in the spliceosome C complex. Interacts with PPIA/CYPA. In terms of processing, sumoylated. As to expression, expressed in all tissues tested, including liver, heart, lung, skeletal muscle, kidney, stomach, large intestine, small intestine, pancreas, spleen, peritoneal macrophage and thyroid.

It localises to the nucleus matrix. Pre-mRNA binding protein, binds avidly to poly(G) and poly(U) RNA homopolymers. Involved in splicing. Acts as a receptor for carcinoembryonic antigen in Kupffer cells, may initiate a series of signaling events leading to tyrosine phosphorylation of proteins and induction of IL-1 alpha, IL-6, IL-10 and tumor necrosis factor alpha cytokines. The sequence is that of Heterogeneous nuclear ribonucleoprotein M (Hnrnpm) from Rattus norvegicus (Rat).